The sequence spans 136 residues: Histone H3.2 (136 aa).

Residues 1 to 43 are disordered; it reads MARTKQTARKSTGGKAPRKQLATKAARKSAPATGGVKKPHRFR. Lys-5 is subject to N6-methylated lysine. Lys-10 is modified (N6-acetyllysine; alternate). Lys-10 is modified (N6-methylated lysine; alternate). Ser-11 is modified (phosphoserine). Thr-12 bears the Phosphothreonine mark. Lys-15 bears the N6-acetyllysine mark. Residues Lys-19 and Lys-24 each carry the N6-acetyllysine; alternate modification. N6-methylated lysine; alternate occurs at positions 19 and 24. Lys-28 bears the N6-methylated lysine mark. Ser-29 is modified (phosphoserine). Residue Lys-37 is modified to N6-methylated lysine.

This sequence belongs to the histone H3 family. The nucleosome is a histone octamer containing two molecules each of H2A, H2B, H3 and H4 assembled in one H3-H4 heterotetramer and two H2A-H2B heterodimers. The octamer wraps approximately 147 bp of DNA. In terms of processing, acetylation is generally linked to gene activation. Can be acetylated to form H3K9ac, H3K14ac, H3K18ac and H3K23ac. H3K9ac could compete with H3K9me and prevent gene silencing. H3K9ac is restricted to euchromatin. Post-translationally, methylated to form mainly H3K4me, H3K9me, H3K18me, H3K23me, H3K27me and H3K36me. H3K4me1/2/3, H3K9me3, H3K27me3 and H3K36me1/2/3 are typical marks for euchromatin, whereas heterochromatic chromocenters are enriched in H3K9me1/2 and H3K27me1/2. H2BK143ub1 is probably prerequisite for H3K4me. Can be phosphorylated to form H3S10ph, H3T11ph and H3S28ph.

It is found in the nucleus. The protein resides in the chromosome. In terms of biological role, core component of nucleosome. Nucleosomes wrap and compact DNA into chromatin, limiting DNA accessibility to the cellular machineries which require DNA as a template. Histones thereby play a central role in transcription regulation, DNA repair, DNA replication and chromosomal stability. DNA accessibility is regulated via a complex set of post-translational modifications of histones, also called histone code, and nucleosome remodeling. In Encephalartos altensteinii (Altenstein's bread tree), this protein is Histone H3.2.